The following is a 61-amino-acid chain: Large ribosomal subunit protein uL30 (61 aa).

This sequence belongs to the universal ribosomal protein uL30 family. As to quaternary structure, part of the 50S ribosomal subunit.

This chain is Large ribosomal subunit protein uL30, found in Saccharophagus degradans (strain 2-40 / ATCC 43961 / DSM 17024).